Reading from the N-terminus, the 489-residue chain is Serine/threonine-protein kinase BSK3 (489 aa).

Glycine 2 carries N-myristoyl glycine lipidation. The 267-residue stretch at 58 to 324 (EYIVSEHGEK…ETEVLSHVLM (267 aa)) folds into the Protein kinase domain. Residues 64-72 (HGEKAPNVV) and lysine 86 each bind ATP. The Proton acceptor role is filled by aspartate 180. Position 212 is a phosphoserine (serine 212).

The protein belongs to the protein kinase superfamily. Ser/Thr protein kinase family. In terms of assembly, interacts with BRI1. In terms of processing, phosphorylated by BRI1 upon brassinolide (BL) treatment. Phosphorylated by ASK7/BIN2 and ASK9/BIL2.

It is found in the cell membrane. The catalysed reaction is L-seryl-[protein] + ATP = O-phospho-L-seryl-[protein] + ADP + H(+). It catalyses the reaction L-threonyl-[protein] + ATP = O-phospho-L-threonyl-[protein] + ADP + H(+). Functionally, probable serine/threonine kinase that acts as a positive regulator of brassinosteroid (BR) signaling downstream of the receptor kinase BRI1. Mediates signal transduction from BRI1 by functioning as substrate of BRI1. Functions redundantly with BSK4, BSK6, BSK7 and BSK8. The sequence is that of Serine/threonine-protein kinase BSK3 from Arabidopsis thaliana (Mouse-ear cress).